Consider the following 240-residue polypeptide: Aquaporin SIP1-1 (240 aa).

The next 2 helical transmembrane spans lie at 13–33 (LMTFSWVVLSATFGIQTAAII) and 44–64 (APLVILTSLIFVYVSIFTVIF). An NPA 1 motif is present at residues 70–72 (NPT). The next 3 membrane-spanning stretches (helical) occupy residues 89 to 109 (SLAIRLPAQAIGAAGGALAIM), 132 to 152 (GAIAETILSFGITFAVLLIIL), and 163 to 183 (FLLALATISFVVAGSKYTGPA). The NPA 2 motif lies at 185–187 (NPA). A helical membrane pass occupies residues 203–223 (DHIYVYWISSFVGALSAALLF).

It belongs to the MIP/aquaporin (TC 1.A.8) family. SIP (TC 1.A.8.10) subfamily. In terms of tissue distribution, expressed in roots and above ground. Expressed in elongating regions of the root tips, trichome cells of the rosette leaves, vascular tissues of the flower petals, stigma, stamens (anthers and filaments), pollen and the top and bottom (receptacle) of siliques.

The protein resides in the endoplasmic reticulum membrane. Its function is as follows. Water channel required to facilitate the transport of water across cell membrane. This is Aquaporin SIP1-1 (SIP1-1) from Arabidopsis thaliana (Mouse-ear cress).